Consider the following 348-residue polypeptide: Outer membrane protein assembly factor BamC (348 aa).

The signal sequence occupies residues 1–24; sequence MATLLQTSKVMKVAGLSLVVFLAA. The N-palmitoyl cysteine moiety is linked to residue cysteine 25. Residue cysteine 25 is the site of S-diacylglycerol cysteine attachment. Residues 211–230 form a disordered region; the sequence is SQQQEEAGQNNAKDSGALTV.

This sequence belongs to the BamC family. In terms of assembly, part of the Bam complex, which is composed of the outer membrane protein BamA, and four lipoproteins BamB, BamC, BamD and BamE.

The protein resides in the cell outer membrane. Functionally, part of the outer membrane protein assembly complex, which is involved in assembly and insertion of beta-barrel proteins into the outer membrane. The chain is Outer membrane protein assembly factor BamC from Xenorhabdus nematophila (strain ATCC 19061 / DSM 3370 / CCUG 14189 / LMG 1036 / NCIMB 9965 / AN6).